Consider the following 546-residue polypeptide: Carotenoid 9,10(9',10')-cleavage dioxygenase (546 aa).

Positions 226, 274, 340, and 530 each coordinate Fe cation.

It belongs to the carotenoid oxygenase family. The cofactor is Fe(2+). In terms of tissue distribution, in vegetative and floral tissues.

It localises to the cytoplasm. It catalyses the reaction all-trans-zeaxanthin + 2 O2 = 4,9-dimethyldodeca-2,4,6,8,10-pentaenedial + 2 (3R)-hydroxy-beta-ionone. Its function is as follows. Cleaves a variety of carotenoids symmetrically at both the 9-10 and 9'-10' double bonds. Catalyzes the formation of 4,9-dimethyldodeca-2,4,6,8,10-pentaene-1,12-dialdehyde and probably hydroxydihydro-beta-ionone from zeaxanthin. The sequence is that of Carotenoid 9,10(9',10')-cleavage dioxygenase (CCD) from Crocus sativus (Saffron).